A 246-amino-acid polypeptide reads, in one-letter code: Probable transcriptional regulatory protein NT01CX_1819 (246 aa).

The protein belongs to the TACO1 family.

The protein localises to the cytoplasm. The protein is Probable transcriptional regulatory protein NT01CX_1819 of Clostridium novyi (strain NT).